The primary structure comprises 287 residues: Protein-export membrane protein SecF (287 aa).

6 helical membrane-spanning segments follow: residues 21–41 (LIAIPAAITVIALLLVVFNGL), 129–149 (QIYWAIGFAFLFMSVTVFIIF), 158–178 (VILAAASDIIIAVGGMSLFGI), 182–202 (LASVGAILMLIGYSVDTDILL), 226–246 (VTMSIAAIASMAALYLVTVFV), and 259–279 (VLIIGLLADILTTWLMNLGIL).

This sequence belongs to the SecD/SecF family. SecF subfamily. As to quaternary structure, part of the protein translocation apparatus. Forms a complex with SecD.

It is found in the cell membrane. Involved in protein export. The protein is Protein-export membrane protein SecF of Methanothermobacter thermautotrophicus (strain ATCC 29096 / DSM 1053 / JCM 10044 / NBRC 100330 / Delta H) (Methanobacterium thermoautotrophicum).